The primary structure comprises 344 residues: Microcin C7 self-immunity protein MccF (344 aa).

The protein belongs to the peptidase S66 family.

Functionally, involved in specific self-immunity to microcin C7. This is Microcin C7 self-immunity protein MccF (mccF) from Escherichia coli.